The following is a 119-amino-acid chain: RIIa domain-containing protein 1 (119 aa).

Residues lysine 70–leucine 104 form the RIIa domain.

Abundant in tissues rich in highly ciliated cells, such as testis, trachea and olfactory epithelium.

This Mus musculus (Mouse) protein is RIIa domain-containing protein 1 (Riiad1).